Consider the following 83-residue polypeptide: ATP synthase subunit c (83 aa).

Transmembrane regions (helical) follow at residues 10–30 (IAVALLIGMGALGTAIGFGLL) and 52–72 (MFIVAGLLDAVTMIGVGIALY).

This sequence belongs to the ATPase C chain family. F-type ATPases have 2 components, F(1) - the catalytic core - and F(0) - the membrane proton channel. F(1) has five subunits: alpha(3), beta(3), gamma(1), delta(1), epsilon(1). F(0) has three main subunits: a(1), b(2) and c(10-14). The alpha and beta chains form an alternating ring which encloses part of the gamma chain. F(1) is attached to F(0) by a central stalk formed by the gamma and epsilon chains, while a peripheral stalk is formed by the delta and b chains.

The protein resides in the cell inner membrane. In terms of biological role, f(1)F(0) ATP synthase produces ATP from ADP in the presence of a proton or sodium gradient. F-type ATPases consist of two structural domains, F(1) containing the extramembraneous catalytic core and F(0) containing the membrane proton channel, linked together by a central stalk and a peripheral stalk. During catalysis, ATP synthesis in the catalytic domain of F(1) is coupled via a rotary mechanism of the central stalk subunits to proton translocation. Key component of the F(0) channel; it plays a direct role in translocation across the membrane. A homomeric c-ring of between 10-14 subunits forms the central stalk rotor element with the F(1) delta and epsilon subunits. The polypeptide is ATP synthase subunit c (Shewanella amazonensis (strain ATCC BAA-1098 / SB2B)).